A 564-amino-acid polypeptide reads, in one-letter code: Copine-8 (564 aa).

C2 domains follow at residues 1–133 (MDSR…RLEK) and 142–265 (KCGT…FNVY). Ca(2+) contacts are provided by D39, D45, D99, D101, S104, K109, D111, D173, D179, D235, D237, and D243. At S260 the chain carries Phosphoserine. In terms of domain architecture, VWFA spans 309 to 510 (NFTVAIDFTA…VQFVPFRDYI (202 aa)).

This sequence belongs to the copine family. Requires Ca(2+) as cofactor.

In terms of biological role, probable calcium-dependent phospholipid-binding protein that may play a role in calcium-mediated intracellular processes. This is Copine-8 from Homo sapiens (Human).